We begin with the raw amino-acid sequence, 205 residues long: Outer-membrane lipoprotein LolB (205 aa).

Positions 1-17 are cleaved as a signal peptide; sequence MRLRLFLAASALALLSG. Cysteine 18 carries the N-palmitoyl cysteine lipid modification. Residue cysteine 18 is the site of S-diacylglycerol cysteine attachment.

It belongs to the LolB family. In terms of assembly, monomer.

It is found in the cell outer membrane. Plays a critical role in the incorporation of lipoproteins in the outer membrane after they are released by the LolA protein. The sequence is that of Outer-membrane lipoprotein LolB from Pseudomonas paraeruginosa (strain DSM 24068 / PA7) (Pseudomonas aeruginosa (strain PA7)).